A 734-amino-acid polypeptide reads, in one-letter code: MEHTYQYAWVIPLLPLPVIMSMGFGLFLVPTATKNLRRIWAFPSVLLLSIAMVFSVHLSIQQINGSSIYQYLWSWTVNNDFSLEFGYLIDPLTSIMLILITTVGILVLIYSDDYMSHDEGYLRFFVYISFFNTSMLGLVTSSNLIQIYFFWELVGMCSYLLIGFWFTRPIAASACQKAFVTNRVGDFGLLLGILGFFWITGSLEFRDLFKIANNWIPNNEINSLLTILCAFLLFLGAVAKSAQFPLHVWLPDAMEGPTPISALIHAATMVAAGIFLIARLLPLFISLPLIMSFISLIGTLTLFLGATLALAQRDIKRSLAYSTMSQLGYMMLALGIGSYQAALFHLITHAYSKALLFLGSGSVIHSMEPLVGYSPDKSQNMVLMGGLRKYIPITRTCFLWGTLSLCGIPPLACFWSKDEILSNSWLYSPFFGIIASFTAGLTAFYMFRIYLLTFDGYLRVHFQNYSSTKEDSLYSISLWGKRISKGVNRDFVLSTAKSGVSFFSQNLSKIHVNTGNRIGSFSTSLGTKNTFVYPHEPGNTMLFPLLILLLCTLFIGSIGIHFDNEIGELTILSKWLTPSINFFQESSNSSINSYEFITNAISSVSLAIFGLFIAYMFYGSAYSFFQNLDLINSFVKGGPKKYFFHQLKKKIYSWSYNRGYIDIFYTRTFTLGIRGLTELTQFFDKGVIDGITNGVGLASFCIGEEIKYVGGGRISSYLFFFLCYVSVFLFFFLS.

16 helical membrane passes run 9–29 (WVIP…LFLV), 39–59 (IWAF…VHLS), 89–109 (IDPL…LVLI), 125–145 (FVYI…SNLI), 147–167 (IYFF…FWFT), 185–205 (GDFG…SLEF), 224–244 (LLTI…SAQF), 258–278 (TPIS…FLIA), 280–300 (LLPL…IGTL), 327–347 (LGYM…FHLI), 354–374 (ALLF…VGYS), 396–416 (TCFL…CFWS), 425–445 (WLYS…TAFY), 542–562 (LFPL…GIHF), 605–625 (SLAI…YSFF), and 714–734 (ISSY…FFLS).

It belongs to the complex I subunit 5 family. As to quaternary structure, NDH is composed of at least 16 different subunits, 5 of which are encoded in the nucleus.

Its subcellular location is the plastid. The protein localises to the chloroplast thylakoid membrane. It carries out the reaction a plastoquinone + NADH + (n+1) H(+)(in) = a plastoquinol + NAD(+) + n H(+)(out). It catalyses the reaction a plastoquinone + NADPH + (n+1) H(+)(in) = a plastoquinol + NADP(+) + n H(+)(out). NDH shuttles electrons from NAD(P)H:plastoquinone, via FMN and iron-sulfur (Fe-S) centers, to quinones in the photosynthetic chain and possibly in a chloroplast respiratory chain. The immediate electron acceptor for the enzyme in this species is believed to be plastoquinone. Couples the redox reaction to proton translocation, and thus conserves the redox energy in a proton gradient. The sequence is that of NAD(P)H-quinone oxidoreductase subunit 5, chloroplastic (ndhF) from Oryza nivara (Indian wild rice).